We begin with the raw amino-acid sequence, 517 residues long: UDP-N-acetylmuramoyl-tripeptide--D-alanyl-D-alanine ligase (517 aa).

An ATP-binding site is contributed by 138–144 (GSSGKTS).

It belongs to the MurCDEF family. MurF subfamily.

It is found in the cytoplasm. It catalyses the reaction D-alanyl-D-alanine + UDP-N-acetyl-alpha-D-muramoyl-L-alanyl-gamma-D-glutamyl-meso-2,6-diaminopimelate + ATP = UDP-N-acetyl-alpha-D-muramoyl-L-alanyl-gamma-D-glutamyl-meso-2,6-diaminopimeloyl-D-alanyl-D-alanine + ADP + phosphate + H(+). It participates in cell wall biogenesis; peptidoglycan biosynthesis. Its function is as follows. Involved in cell wall formation. Catalyzes the final step in the synthesis of UDP-N-acetylmuramoyl-pentapeptide, the precursor of murein. In Mycobacterium leprae (strain TN), this protein is UDP-N-acetylmuramoyl-tripeptide--D-alanyl-D-alanine ligase.